A 452-amino-acid chain; its full sequence is Keratin, type I cytoskeletal 42 (452 aa).

Residues 4–93 form a head region; it reads TTSIRQFSTS…GVSDALLGGS (90 aa). 2 coiled-coil regions span residues 93–132 and 188–407; these read SEKE…WYKK and NLRM…HLAT. The tract at residues 94–129 is coil 1A; sequence EKETMQNLNDRLATYLDRVRALEEANTDLEVKIREW. The 312-residue stretch at 94–405 folds into the IF rod domain; sequence EKETMQNLND…RLLEGEDAHL (312 aa). Residues 130 to 147 are linker 1; it reads YKKQGPGPARDYSPYFKT. Residues 148 to 239 form a coil 1B region; it reads IEDLRNKILA…KNHEEEMNAL (92 aa). Positions 240–262 are linker 12; sequence RGQVGGDVNVEMDAAPGVDLSRI. The tract at residues 263-401 is coil 2; that stretch reads LNEMRDQYEK…ATYRRLLEGE (139 aa). Residues 402-452 form a tail region; it reads DAHLATQYSSSLASQASREGTVTSRQVRTIVEEVQDGKVVSSREQVHRSTH.

It belongs to the intermediate filament family. As to quaternary structure, heterodimer of a type I and a type II keratin. Colocalizes with KRT8/KRT18 filament network.

Its subcellular location is the cytoplasm. The protein is Keratin, type I cytoskeletal 42 of Rattus norvegicus (Rat).